Consider the following 459-residue polypeptide: Jacalin-related lectin 12 (459 aa).

Jacalin-type lectin domains lie at 2-148 (SQDS…YFTP), 151-296 (PTRM…YITT), and 298-443 (TLTK…YSFP).

It belongs to the jacalin lectin family.

The chain is Jacalin-related lectin 12 (JAL12) from Arabidopsis thaliana (Mouse-ear cress).